Here is a 377-residue protein sequence, read N- to C-terminus: Chaperone protein DnaJ (377 aa).

A J domain is found at 5 to 70; it reads DYYEILGVSK…EKRSAYDQYG (66 aa). The CR-type zinc finger occupies 131-209; it reads GVVREICVPT…CRGSGRIERT (79 aa). Residues Cys-144, Cys-147, Cys-161, Cys-164, Cys-183, Cys-186, Cys-197, and Cys-200 each coordinate Zn(2+). CXXCXGXG motif repeat units follow at residues 144–151, 161–168, 183–190, and 197–204; these read CLQCRGSG, CVTCHGHG, CPSCNGHG, and CNKCRGSG.

It belongs to the DnaJ family. In terms of assembly, homodimer. The cofactor is Zn(2+).

It is found in the cytoplasm. Its function is as follows. Participates actively in the response to hyperosmotic and heat shock by preventing the aggregation of stress-denatured proteins and by disaggregating proteins, also in an autonomous, DnaK-independent fashion. Unfolded proteins bind initially to DnaJ; upon interaction with the DnaJ-bound protein, DnaK hydrolyzes its bound ATP, resulting in the formation of a stable complex. GrpE releases ADP from DnaK; ATP binding to DnaK triggers the release of the substrate protein, thus completing the reaction cycle. Several rounds of ATP-dependent interactions between DnaJ, DnaK and GrpE are required for fully efficient folding. Also involved, together with DnaK and GrpE, in the DNA replication of plasmids through activation of initiation proteins. In Blochmanniella floridana, this protein is Chaperone protein DnaJ.